The sequence spans 341 residues: DNA-directed RNA polymerase subunit alpha (341 aa).

An alpha N-terminal domain (alpha-NTD) region spans residues 1–233 (MIQDEVPVSA…DLFLPFLHTE (233 aa)). The segment at 262–341 (DRMAKEVAFK…NLPRNKFSID (80 aa)) is alpha C-terminal domain (alpha-CTD).

The protein belongs to the RNA polymerase alpha chain family. In plastids the minimal PEP RNA polymerase catalytic core is composed of four subunits: alpha, beta, beta', and beta''. When a (nuclear-encoded) sigma factor is associated with the core the holoenzyme is formed, which can initiate transcription.

The protein localises to the plastid. The protein resides in the chloroplast. It catalyses the reaction RNA(n) + a ribonucleoside 5'-triphosphate = RNA(n+1) + diphosphate. DNA-dependent RNA polymerase catalyzes the transcription of DNA into RNA using the four ribonucleoside triphosphates as substrates. The sequence is that of DNA-directed RNA polymerase subunit alpha from Angiopteris evecta (Mule's foot fern).